A 97-amino-acid chain; its full sequence is Putative pterin-4-alpha-carbinolamine dehydratase (97 aa).

Belongs to the pterin-4-alpha-carbinolamine dehydratase family.

The catalysed reaction is (4aS,6R)-4a-hydroxy-L-erythro-5,6,7,8-tetrahydrobiopterin = (6R)-L-erythro-6,7-dihydrobiopterin + H2O. In Rhizorhabdus wittichii (strain DSM 6014 / CCUG 31198 / JCM 15750 / NBRC 105917 / EY 4224 / RW1) (Sphingomonas wittichii), this protein is Putative pterin-4-alpha-carbinolamine dehydratase.